We begin with the raw amino-acid sequence, 141 residues long: Thioredoxin-like protein SkfH (141 aa).

The Thioredoxin domain occupies 2–141 (KDEQMLTEWP…DKMLKKIAGL (140 aa)). Cys41 and Cys44 are disulfide-bonded.

In terms of biological role, required for production of the bacteriocin SkfA. This Bacillus subtilis (strain 168) protein is Thioredoxin-like protein SkfH.